A 160-amino-acid chain; its full sequence is Nucleotide-binding protein CJA_2652 (160 aa).

The protein belongs to the YajQ family.

Nucleotide-binding protein. The protein is Nucleotide-binding protein CJA_2652 of Cellvibrio japonicus (strain Ueda107) (Pseudomonas fluorescens subsp. cellulosa).